Reading from the N-terminus, the 727-residue chain is DNA replication licensing factor MCM5 (727 aa).

Positions 325–531 (VYKNICTKIA…SQDKEIASHI (207 aa)) constitute an MCM domain. 375-382 (GDPSTAKS) contributes to the ATP binding site. The Arginine finger signature appears at 507–510 (SRFD).

It belongs to the MCM family. In terms of assembly, component of the minichromosome maintenance (MCM) complex, a heterotetramer composed of MCM2, MCM3, MCM4, MCM5, MCM6 and MCM7. Interacts with EGT1. As to expression, expressed in shoot apex and flower buds.

It is found in the nucleus. It localises to the cytoplasm. The enzyme catalyses ATP + H2O = ADP + phosphate + H(+). Functionally, probable component of the MCM2-7 complex (MCM complex) that may function as a DNA helicase and which is essential to undergo a single round of replication initiation and elongation per cell cycle in eukaryotic cells. In Arabidopsis thaliana (Mouse-ear cress), this protein is DNA replication licensing factor MCM5 (MCM5).